The sequence spans 292 residues: Peroxisomal 2,4-dienoyl-CoA reductase [(3E)-enoyl-CoA-producing] (292 aa).

Ala2 is modified (N-acetylalanine). Residues 35–40, 60–64, and Asp86 contribute to the NADP(+) site; these read GGGSGI and RSLQK. Arg60 contacts substrate. Lys64 carries the post-translational modification N6-acetyllysine. Substrate is bound by residues Arg88, Phe118, and 126-128; that span reads SFN. Position 151 is an N6-acetyllysine (Lys151). Residues Lys182 and 208–214 contribute to the NADP(+) site; that span reads PGAISGT. Substrate is bound at residue Arg219. At Ser287 the chain carries Phosphoserine. The Microbody targeting signal signature appears at 290-292; sequence AKL. Lys291 carries the N6-acetyllysine modification.

Belongs to the short-chain dehydrogenases/reductases (SDR) family. 2,4-dienoyl-CoA reductase subfamily. In terms of assembly, monomer, dimer and oligomer.

It is found in the peroxisome. The enzyme catalyses a (2E,4Z)-dienoyl-CoA + NADPH + H(+) = a 4,5-saturated-(3E)-enoyl-CoA + NADP(+). It catalyses the reaction a (2E,4E)-dienoyl-CoA + NADPH + H(+) = a 4,5-saturated-(3E)-enoyl-CoA + NADP(+). The catalysed reaction is (2E,4E)-hexadienoyl-CoA + NADPH + H(+) = (3E)-hexenoyl-CoA + NADP(+). It carries out the reaction (2E,4E)-decadienoyl-CoA + NADPH + H(+) = (3E)-decenoyl-CoA + NADP(+). The enzyme catalyses (2E,4Z,7Z,10Z,13Z,16Z,19Z)-docosaheptaenoyl-CoA + NADPH + H(+) = (3E,7Z,10Z,13Z,16Z,19Z)-docosahexaenoyl-CoA + NADP(+). Auxiliary enzyme of beta-oxidation. Participates in the degradation of unsaturated fatty enoyl-CoA esters having double bonds in both even- and odd-numbered positions in peroxisome. Catalyzes the NADP-dependent reduction of 2,4-dienoyl-CoA to yield trans-3-enoyl-CoA. Has activity towards short and medium chain 2,4-dienoyl-CoAs, but also towards 2,4,7,10,13,16,19-docosaheptaenoyl-CoA, suggesting that it does not constitute a rate limiting step in the peroxisomal degradation of docosahexaenoic acid. The polypeptide is Peroxisomal 2,4-dienoyl-CoA reductase [(3E)-enoyl-CoA-producing] (Decr2) (Mus musculus (Mouse)).